Consider the following 290-residue polypeptide: S-adenosylmethionine-dependent nucleotide dehydratase (290 aa).

Positions 6-226 (SGNNIIPSVN…VNRHSKNKFL (221 aa)) constitute a Radical SAM core domain. [4Fe-4S] cluster is bound by residues Cys-22, Cys-26, and Cys-29.

This sequence belongs to the radical SAM superfamily. Viperin family. The cofactor is [4Fe-4S] cluster.

The enzyme catalyses UTP + AH2 + S-adenosyl-L-methionine = 3'-deoxy-3',4'-didehydro-UTP + 5'-deoxyadenosine + L-methionine + A + H2O + H(+). Its function is as follows. Expression of pVip47 in E.coli (strain MG1655) confers resistance to phage P1; has no effect against T7. Catalyzes the conversion of uridine triphosphate (UTP) to 3'-deoxy-3',4'-didehydro-UTP (ddhUTP), probably via a SAM-dependent radical mechanism. The modified nucleotide represses transcription from T7 RNA polymerase-directed genes (possibly by acting as chain terminators), strongly suggesting these nucleotides block viral polymerase transcription. How this protein allows bacteria to resist viruses that do not encode their own RNA polymerase (such as lambda, P1) is unknown. This chain is S-adenosylmethionine-dependent nucleotide dehydratase, found in Flammeovirga pacifica.